The primary structure comprises 397 residues: Na(+)/H(+) antiporter NhaA 1 (397 aa).

12 helical membrane-spanning segments follow: residues 15–35 (FQLE…ALII), 42–62 (YLYG…LNIA), 65–85 (LLLW…GLEV), 101–121 (ILPA…YWFI), 129–149 (VAGW…VLAL), 160–180 (LFLM…IALF), 183–203 (GTLS…LVAM), 219–241 (LILW…ALAF), 265–285 (WVAY…SLAG), 299–319 (ITIG…WVAV), 335–355 (ILGV…VGSL), and 370–390 (MGIL…TAMA).

Belongs to the NhaA Na(+)/H(+) (TC 2.A.33) antiporter family.

The protein resides in the cell inner membrane. The enzyme catalyses Na(+)(in) + 2 H(+)(out) = Na(+)(out) + 2 H(+)(in). Functionally, na(+)/H(+) antiporter that extrudes sodium in exchange for external protons. The chain is Na(+)/H(+) antiporter NhaA 1 from Pseudomonas putida (strain ATCC 47054 / DSM 6125 / CFBP 8728 / NCIMB 11950 / KT2440).